We begin with the raw amino-acid sequence, 464 residues long: Cyclic 2,3-diphosphoglycerate synthetase (464 aa).

This sequence belongs to the cyclic 2,3-diphosphoglycerate synthetase family.

It is found in the cytoplasm. It carries out the reaction (2R)-2,3-bisphosphoglycerate + ATP + H(+) = cyclic (2R)-2,3-bisphosphoglycerate + ADP + phosphate. Its activity is regulated as follows. Activity decreases in response to phosphate limitation. In terms of biological role, catalyzes the formation of cyclic 2,3-diphosphoglycerate (cDPG) by formation of an intramolecular phosphoanhydride bond at the expense of ATP. Not able to catalyze cDPG hydrolysis. May be involved in osmotic balance. This chain is Cyclic 2,3-diphosphoglycerate synthetase (cpgS), found in Methanothermobacter thermautotrophicus (strain ATCC 29096 / DSM 1053 / JCM 10044 / NBRC 100330 / Delta H) (Methanobacterium thermoautotrophicum).